A 681-amino-acid chain; its full sequence is CAI-1 autoinducer sensor kinase/phosphatase CqsS (681 aa).

4 consecutive transmembrane segments (helical) span residues 17-37 (LVGW…EFMF), 73-93 (AYYQ…MLLM), 112-132 (ILLV…IGLA), and 148-168 (MDWT…LFYF). The 227-residue stretch at 187–413 (GIAHEMRNPL…QFTMTFPTIG (227 aa)) folds into the Histidine kinase domain. Phosphohistidine; by autocatalysis is present on His190. The Response regulatory domain occupies 564-681 (TIMVVDDNES…RLFDKIANWI (118 aa)). Residue Asp613 is modified to 4-aspartylphosphate.

Its subcellular location is the cell membrane. The catalysed reaction is ATP + protein L-histidine = ADP + protein N-phospho-L-histidine.. In terms of biological role, senses the quorum-sensing autoinducer CAI-1 ((S)-3-hydroxytridecan-4-one) which probably functions as an intragenus signal. The sensory signal is then relayed to LuxU and LuxO. This is CAI-1 autoinducer sensor kinase/phosphatase CqsS (cqsS) from Vibrio campbellii (strain ATCC BAA-1116).